A 2541-amino-acid polypeptide reads, in one-letter code: Talin-1 (2541 aa).

Residues 86-403 (RPLKIRMLDG…GYIDIILKKK (318 aa)) enclose the FERM domain. The tract at residues 280–435 (FMAHKNCGNM…PKKSTVLQQQ (156 aa)) is interaction with LAYN. The segment at 482–655 (RGHMPPLTSA…QTSGELLQQI (174 aa)) is helical bundle R1. The segment at 656–786 (GESDTDPRFQ…ALNDLLQHIK (131 aa)) is helical bundle R2. The interval 787–911 (QHATGGQPIG…NAAAQNAIKK (125 aa)) is helical bundle R3. The helical bundle R4 stretch occupies residues 913 to 1043 (LVHKLEHAAK…RTAAQKAQEA (131 aa)). Residues 1045 to 1205 (GPLEIDSALG…NRCVNCLPGQ (161 aa)) form a helical bundle R5 region. A helical bundle R6 region spans residues 1206-1356 (RDVDAAIRMV…QLITMCTQQA (151 aa)). Positions 1357–1452 (PGQKECDNAL…AYLVGVSDPN (96 aa)) are helical bundle R7A. The segment at 1358–1658 (GQKECDNALR…NMRDKAPGQR (301 aa)) is interaction with VCL and F-actin. The tract at residues 1460–1579 (LVDPTQFARA…NLTAFASNPE (120 aa)) is helical bundle R8. O-linked (GlcNAc) threonine glycosylation occurs at Thr-1486. A helical bundle R7B region spans residues 1580–1652 (FATVPAQISP…IKKLITNMRD (73 aa)). Positions 1654-1821 (APGQRECDEA…TLNEAASAAG (168 aa)) are helical bundle R9. The segment at 1822-1972 (VVGGMVDSIT…VLAALQAGNR (151 aa)) is helical bundle R10. Residue Thr-1889 is glycosylated (O-linked (GlcNAc) threonine). The helical bundle R11 stretch occupies residues 1973-2139 (GTQACITAAS…TVKAVEDEAT (167 aa)). Residues 2140 to 2293 (KGTRALEATI…QAAEAMKGTE (154 aa)) are helical bundle R12. One can recognise an I/LWEQ domain in the interval 2292–2531 (TEWVDPEDPT…MIRQQQYKFL (240 aa)). The segment at 2299–2481 (DPTVIAENEL…AAQKAAAFQD (183 aa)) is helical bundle R13.

Interacts with PIP5K1C and NRAP. Binds with high affinity to vinculin VCL and with low affinity to integrins. Interacts with APBB1IP; this inhibits VCL binding. Interacts with F-actin. Interacts with LAYN. Interacts with THSD1. In terms of processing, phosphorylated.

The protein localises to the cell projection. Its subcellular location is the ruffle membrane. The protein resides in the cytoplasm. It is found in the cytoskeleton. It localises to the cell surface. The protein localises to the cell junction. Its subcellular location is the focal adhesion. High molecular weight cytoskeletal protein concentrated at regions of cell-substratum contact and, in lymphocytes, at cell-cell contacts. Involved in connections of major cytoskeletal structures to the plasma membrane. The protein is Talin-1 (TLN1) of Gallus gallus (Chicken).